Reading from the N-terminus, the 205-residue chain is MKKLAFLILLIVFSNLSLVNAIDDNISNYSKEINELTVKLKELESKNPNDERIEEYKEKLKQLIEKQHELKSQNLKYNETLAYIQSEEYWKMQEEIWEYNNKVMKWFIAISILILGIILATLWILRKDKFLLFLAIFGLIVPFLQFKIPNWLFNILALPLFVYIKFIVPECAEGSFYYSPLITIPISMYGWILIGLAVKFIIKKY.

5 helical membrane passes run 4–24 (LAFLILLIVFSNLSLVNAIDD), 105–125 (KWFIAISILILGIILATLWIL), 130–150 (FLLFLAIFGLIVPFLQFKIPN), 151–171 (WLFNILALPLFVYIKFIVPEC), and 182–202 (ITIPISMYGWILIGLAVKFII).

The protein localises to the cell membrane. This is an uncharacterized protein from Methanocaldococcus jannaschii (strain ATCC 43067 / DSM 2661 / JAL-1 / JCM 10045 / NBRC 100440) (Methanococcus jannaschii).